The primary structure comprises 238 residues: Protein A47 (238 aa).

It belongs to the orthopoxvirus A47 protein family.

The sequence is that of Protein A47 from Vaccinia virus (strain Ankara) (VACV).